Reading from the N-terminus, the 376-residue chain is Zinc finger CCCH domain-containing protein C337.12 (376 aa).

The stretch at 2 to 25 (NEQQLLENIASLAGAINQYKNEKE) forms a coiled coil. The tract at residues 60–95 (SKSTAASPPYVIPSTSSNADDANKEPEKQSTSDYVS) is disordered. Residues 80-89 (DANKEPEKQS) are compositionally biased toward basic and acidic residues. The stretch at 105–140 (KKNILEHDLQARKANLESYRAKLEKEYKTLAENKIQ) forms a coiled coil. 4 consecutive C3H1-type zinc fingers follow at residues 202–228 (SPSAVYCRYYNANGICGKGAACRFVHE), 229–256 (PTRKTICPKFLNGRCNKAEDCNLSHELD), 257–283 (PRRIPACRYFLLGKCNNPNCRYVHIHY), and 284–312 (SENAPICFEFAKYGFCELGTSCKNQHILQ). Positions 347–376 (SKTAGSINPEDSGSEIGSNSLESNLDFISV) are disordered. A compositionally biased stretch (polar residues) spans 349–369 (TAGSINPEDSGSEIGSNSLES).

It localises to the nucleus. This Schizosaccharomyces pombe (strain 972 / ATCC 24843) (Fission yeast) protein is Zinc finger CCCH domain-containing protein C337.12.